The chain runs to 253 residues: Cyclin-C1-2 (253 aa).

This sequence belongs to the cyclin family. Cyclin C subfamily.

This Arabidopsis thaliana (Mouse-ear cress) protein is Cyclin-C1-2 (CYCC1-2).